Reading from the N-terminus, the 652-residue chain is DNA ligase (652 aa).

NAD(+) contacts are provided by residues 29–33 (DSEYD), 78–79 (SL), and E107. Residue K109 is the N6-AMP-lysine intermediate of the active site. Positions 130, 164, 278, and 302 each coordinate NAD(+). Residues C395, C398, C413, and C418 each coordinate Zn(2+). The BRCT domain occupies 577 to 652 (VADAALSGLT…VRDEAWLESL (76 aa)).

Belongs to the NAD-dependent DNA ligase family. LigA subfamily. Requires Mg(2+) as cofactor. It depends on Mn(2+) as a cofactor.

The catalysed reaction is NAD(+) + (deoxyribonucleotide)n-3'-hydroxyl + 5'-phospho-(deoxyribonucleotide)m = (deoxyribonucleotide)n+m + AMP + beta-nicotinamide D-nucleotide.. DNA ligase that catalyzes the formation of phosphodiester linkages between 5'-phosphoryl and 3'-hydroxyl groups in double-stranded DNA using NAD as a coenzyme and as the energy source for the reaction. It is essential for DNA replication and repair of damaged DNA. This chain is DNA ligase, found in Streptococcus pneumoniae (strain P1031).